A 196-amino-acid polypeptide reads, in one-letter code: MQIITTTFIQKVILGSHQLHEQLSIVEARMIESAIVSMLTESFCENEQTLKYLARLLSPMSYMDVINARRGKKICGYPLCYKSAAENSSDGFFIHSMYCNNYHSKCSLYLMRQLSQTPLHERRGVHLTSYINLEFDDMYSVSLLEELVGSEVPIDTVKSLITSFKDLEFDDTYKNEPLPLDVYFGQLTTDEETCIE.

An RTR1-type zinc finger spans residues Y52 to R123. 4 residues coordinate Zn(2+): C75, C80, C99, and H103.

This sequence belongs to the RPAP2 family.

Its subcellular location is the cytoplasm. It localises to the nucleus. The catalysed reaction is O-phospho-L-seryl-[protein] + H2O = L-seryl-[protein] + phosphate. It catalyses the reaction O-phospho-L-threonyl-[protein] + H2O = L-threonyl-[protein] + phosphate. Its function is as follows. Probable RNA polymerase II subunit B1 C-terminal domain (CTD) phosphatase that regulates RNA polymerase II transcription. May have functional redundancy with RTR1. The chain is RNA polymerase II subunit B1 CTD phosphatase RTR2 (RTR2) from Saccharomyces cerevisiae (strain ATCC 204508 / S288c) (Baker's yeast).